We begin with the raw amino-acid sequence, 220 residues long: RPA-interacting protein B (220 aa).

Positions 1-45 (MEAERRHRALYKGTTPPWKETYRKRCVERLKSNRSKLLDKFRQVG) are interaction with importin beta. The interaction with RPA1 stretch occupies residues 49 to 165 (HGGVGGSFLV…QCGVYINTQS (117 aa)). An RIP-type zinc finger spans residues 138–213 (CPVCNRNYLT…ASLFMSCQEC (76 aa)).

As to quaternary structure, interacts directly with the RPA1 subunit of RPA complex. Interacts with importin beta, but not with importin alpha. Forms a complex with the RPA complex and importin beta, which is dissociated by Ran-GTP.

The protein localises to the nucleus. Functionally, mediates the import of RPA complex into the nucleus, via its interaction with importin beta. The sequence is that of RPA-interacting protein B (rpain-b) from Xenopus laevis (African clawed frog).